A 262-amino-acid polypeptide reads, in one-letter code: Tethering factor for nuclear proteasome cut8 (262 aa).

This sequence belongs to the cut8/STS1 family. As to quaternary structure, binds the proteasome. Post-translationally, the N-terminal part (residues 1 to 72) is polyubiquitinated by rhp6, which is required for the interaction with the proteasome.

It localises to the nucleus envelope. In terms of biological role, together with nucleoporin alm1, tethers the proteasome to the nuclear envelope. Involved in ubiquitin-mediated protein degradation and facilitates the degradation of nuclear proteins like mitotic cyclin and cut2. Required for normal progression of anaphase. The chain is Tethering factor for nuclear proteasome cut8 from Schizosaccharomyces pombe (strain 972 / ATCC 24843) (Fission yeast).